A 317-amino-acid polypeptide reads, in one-letter code: Olfactory receptor 51Q1 (317 aa).

Topologically, residues 1 to 27 (MSQVTNTTQEGIYFILTDIPGFEASHI) are extracellular. A glycan (N-linked (GlcNAc...) asparagine) is linked at Asn6. A helical membrane pass occupies residues 28-48 (WISIPVCCLYTISIMGNTTIL). Over 49-56 (TVIRTEPS) the chain is Cytoplasmic. A helical membrane pass occupies residues 57–77 (VHQRMYLFLSMLALTDLGLTL). Residues 78–101 (TTLPTVMQLLWFNVRRISSEACFA) lie on the Extracellular side of the membrane. Cys99 and Cys191 form a disulfide bridge. Residues 102 to 122 (QFFFLHGFSFMESSVLLAMSV) form a helical membrane-spanning segment. At 123–141 (DCYVAICCPLHYASILTNE) the chain is on the cytoplasmic side. A helical membrane pass occupies residues 142–162 (VIGRTGLAIICCCVLAVLPSL). The Extracellular segment spans residues 163–198 (FLLKRLPFCHSHLLSRSYCLHQDMIRLVCADIRLNS). The helical transmembrane segment at 199–219 (WYGFALALLIIIVDPLLIVIS) threads the bilayer. Over 220-239 (YTLILKNILGTATWAERLRA) the chain is Cytoplasmic. A helical transmembrane segment spans residues 240–260 (LNNCLSHILAVLVLYIPMVGV). Over 261–275 (SMTHRFAKHASPLVH) the chain is Extracellular. Residues 276-296 (VIMANIYLLAPPVMNPIIYSV) traverse the membrane as a helical segment. At 297 to 317 (KNKQIQWGMLNFLSLKNMHSR) the chain is on the cytoplasmic side.

The protein belongs to the G-protein coupled receptor 1 family.

The protein resides in the cell membrane. Odorant receptor. This chain is Olfactory receptor 51Q1 (OR51Q1), found in Homo sapiens (Human).